The following is a 574-amino-acid chain: Meiotically up-regulated gene 72 protein (574 aa).

Residues 339 to 374 form a disordered region; it reads VRAGTPQSSPNFNPAMRRSPVGAASRSPSRSTIGIS. Thr343 is modified (phosphothreonine). Residues 364-374 are compositionally biased toward polar residues; sequence RSPSRSTIGIS. Ser392 is modified (phosphoserine). Disordered regions lie at residues 422–451 and 495–574; these read TSPS…NKAG and RNRR…RRMD. Over residues 541 to 554 the composition is skewed to polar residues; that stretch reads LYDTSRYPTRNSKP.

Its subcellular location is the cytoplasm. Has a role in meiosis. This is Meiotically up-regulated gene 72 protein (mug72) from Schizosaccharomyces pombe (strain 972 / ATCC 24843) (Fission yeast).